The chain runs to 815 residues: Echinoderm microtubule-associated protein-like 1 (815 aa).

Residues S31–Q72 are a coiled coil. The segment at N77 to V179 is disordered. Over residues P92–T101 the composition is skewed to polar residues. S113 carries the phosphoserine modification. The span at T126–R138 shows a compositional bias: polar residues. The span at G143–G153 shows a compositional bias: basic and acidic residues. Residues N156–K168 show a composition bias toward low complexity. A tandem atypical propeller in EMLs region spans residues K176–I815. WD repeat units follow at residues E261–S310, T315–W358, K363–L400, Q409–K446, R450–G489, K493–T530, F535–A572, V578–T613, D617–V655, R664–P701, S709–Y768, and A775–V814.

This sequence belongs to the WD repeat EMAP family. Homotrimer; self-association is mediated by the N-terminal coiled coil. Does not interact with EML3. Binds repolymerizing microtubules. Binds unpolymerized tubulins via its WD repeat region. Interacts with TASOR. As to expression, ubiquitous; expressed in most tissues with the exception of thymus and peripheral blood lymphocytes.

Its subcellular location is the cytoplasm. It localises to the perinuclear region. It is found in the cytoskeleton. Its function is as follows. Modulates the assembly and organization of the microtubule cytoskeleton, and probably plays a role in regulating the orientation of the mitotic spindle and the orientation of the plane of cell division. Required for normal proliferation of neuronal progenitor cells in the developing brain and for normal brain development. Does not affect neuron migration per se. The sequence is that of Echinoderm microtubule-associated protein-like 1 (EML1) from Homo sapiens (Human).